The sequence spans 245 residues: Probable transcriptional regulatory protein MAG6590 (245 aa).

The protein belongs to the TACO1 family.

It is found in the cytoplasm. The chain is Probable transcriptional regulatory protein MAG6590 from Mycoplasmopsis agalactiae (strain NCTC 10123 / CIP 59.7 / PG2) (Mycoplasma agalactiae).